The sequence spans 257 residues: DIYKFYKLVENESHPHDYIDSQPEINERMRAILVDWLIDVHTKFELSLETLYLTINIIDRFLAVKTVPRRELQLVGISAMLMASKYEEIWPPEVNDFVCLSDRAYTHEQILAMEKTILNKLEWTLTVPTPFVFLVRFIKAAVPDQELENMAHFMSELGMMNYATLMYCPSMVAASAVFAARCTLNKAPLWNETLKLHTGYSQEQLMDCARLLVGFHSTLGNGKLRVVYRKYSDPQKGAVAVLPPAKLLSEGSASQHS.

It belongs to the cyclin family. Cyclin AB subfamily. Interacts with the CDC2 protein kinase to form a serine/threonine kinase holoenzyme complex also known as maturation promoting factor (MPF). The cyclin subunit imparts substrate specificity to the complex.

Essential for the control of the cell cycle at the G2/M (mitosis) transition. The chain is G2/mitotic-specific cyclin S13-7 from Glycine max (Soybean).